Reading from the N-terminus, the 333-residue chain is tRNA N6-adenosine threonylcarbamoyltransferase (333 aa).

His111 and His115 together coordinate Fe cation. Substrate-binding positions include 134-138 (LVSGG), Asp167, Gly180, and Asn272. Asp300 is a binding site for Fe cation.

This sequence belongs to the KAE1 / TsaD family. The cofactor is Fe(2+).

It is found in the cytoplasm. It carries out the reaction L-threonylcarbamoyladenylate + adenosine(37) in tRNA = N(6)-L-threonylcarbamoyladenosine(37) in tRNA + AMP + H(+). In terms of biological role, required for the formation of a threonylcarbamoyl group on adenosine at position 37 (t(6)A37) in tRNAs that read codons beginning with adenine. Is involved in the transfer of the threonylcarbamoyl moiety of threonylcarbamoyl-AMP (TC-AMP) to the N6 group of A37, together with TsaE and TsaB. TsaD likely plays a direct catalytic role in this reaction. In Hamiltonella defensa subsp. Acyrthosiphon pisum (strain 5AT), this protein is tRNA N6-adenosine threonylcarbamoyltransferase.